The following is a 269-amino-acid chain: Shikimate dehydrogenase (NADP(+)) (269 aa).

Shikimate is bound by residues 17–19 (SKS) and Thr-64. Catalysis depends on Lys-68, which acts as the Proton acceptor. Glu-80 provides a ligand contact to NADP(+). Positions 89 and 105 each coordinate shikimate. Residues 130 to 134 (GAGGA), 154 to 159 (NRTHTK), and Met-213 contribute to the NADP(+) site. Tyr-215 contributes to the shikimate binding site. An NADP(+)-binding site is contributed by Gly-237.

The protein belongs to the shikimate dehydrogenase family. As to quaternary structure, homodimer.

The catalysed reaction is shikimate + NADP(+) = 3-dehydroshikimate + NADPH + H(+). The protein operates within metabolic intermediate biosynthesis; chorismate biosynthesis; chorismate from D-erythrose 4-phosphate and phosphoenolpyruvate: step 4/7. Functionally, involved in the biosynthesis of the chorismate, which leads to the biosynthesis of aromatic amino acids. Catalyzes the reversible NADPH linked reduction of 3-dehydroshikimate (DHSA) to yield shikimate (SA). This is Shikimate dehydrogenase (NADP(+)) from Neisseria mucosa.